The chain runs to 351 residues: Peptide chain release factor 1 (351 aa).

An N5-methylglutamine modification is found at glutamine 229.

It belongs to the prokaryotic/mitochondrial release factor family. In terms of processing, methylated by PrmC. Methylation increases the termination efficiency of RF1.

Its subcellular location is the cytoplasm. In terms of biological role, peptide chain release factor 1 directs the termination of translation in response to the peptide chain termination codons UAG and UAA. The sequence is that of Peptide chain release factor 1 from Cereibacter sphaeroides (strain ATCC 17023 / DSM 158 / JCM 6121 / CCUG 31486 / LMG 2827 / NBRC 12203 / NCIMB 8253 / ATH 2.4.1.) (Rhodobacter sphaeroides).